The following is a 162-amino-acid chain: 2-C-methyl-D-erythritol 2,4-cyclodiphosphate synthase (162 aa).

2 residues coordinate a divalent metal cation: D12 and H14. Residues 12–14 and 38–39 each bind 4-CDP-2-C-methyl-D-erythritol 2-phosphate; these read DVH and HS. H46 lines the a divalent metal cation pocket. Residues 60 to 62, 65 to 69, and R146 each bind 4-CDP-2-C-methyl-D-erythritol 2-phosphate; these read DIG and FPDTD.

This sequence belongs to the IspF family. In terms of assembly, homotrimer. Requires a divalent metal cation as cofactor.

The catalysed reaction is 4-CDP-2-C-methyl-D-erythritol 2-phosphate = 2-C-methyl-D-erythritol 2,4-cyclic diphosphate + CMP. It functions in the pathway isoprenoid biosynthesis; isopentenyl diphosphate biosynthesis via DXP pathway; isopentenyl diphosphate from 1-deoxy-D-xylulose 5-phosphate: step 4/6. Functionally, involved in the biosynthesis of isopentenyl diphosphate (IPP) and dimethylallyl diphosphate (DMAPP), two major building blocks of isoprenoid compounds. Catalyzes the conversion of 4-diphosphocytidyl-2-C-methyl-D-erythritol 2-phosphate (CDP-ME2P) to 2-C-methyl-D-erythritol 2,4-cyclodiphosphate (ME-CPP) with a corresponding release of cytidine 5-monophosphate (CMP). The chain is 2-C-methyl-D-erythritol 2,4-cyclodiphosphate synthase from Bordetella avium (strain 197N).